We begin with the raw amino-acid sequence, 415 residues long: Gamma-glutamyl phosphate reductase (415 aa).

The protein belongs to the gamma-glutamyl phosphate reductase family.

It is found in the cytoplasm. It carries out the reaction L-glutamate 5-semialdehyde + phosphate + NADP(+) = L-glutamyl 5-phosphate + NADPH + H(+). It functions in the pathway amino-acid biosynthesis; L-proline biosynthesis; L-glutamate 5-semialdehyde from L-glutamate: step 2/2. In terms of biological role, catalyzes the NADPH-dependent reduction of L-glutamate 5-phosphate into L-glutamate 5-semialdehyde and phosphate. The product spontaneously undergoes cyclization to form 1-pyrroline-5-carboxylate. This Listeria welshimeri serovar 6b (strain ATCC 35897 / DSM 20650 / CCUG 15529 / CIP 8149 / NCTC 11857 / SLCC 5334 / V8) protein is Gamma-glutamyl phosphate reductase.